Reading from the N-terminus, the 71-residue chain is Conotoxin AbVIG (71 aa).

The N-terminal stretch at valine 1–alanine 17 is a signal peptide. Positions glutamate 18–threonine 40 are excised as a propeptide. Cystine bridges form between cysteine 43-cysteine 57, cysteine 50-cysteine 61, and cysteine 56-cysteine 68.

The protein belongs to the conotoxin O1 superfamily. Expressed by the venom duct.

The protein resides in the secreted. In Conus abbreviatus (Abbreviated cone), this protein is Conotoxin AbVIG.